Consider the following 306-residue polypeptide: Protein LOT5 (306 aa).

Belongs to the LOT5 family.

Its subcellular location is the cytoplasm. It localises to the nucleus. The sequence is that of Protein LOT5 (LOT5) from Saccharomyces cerevisiae (strain ATCC 204508 / S288c) (Baker's yeast).